Reading from the N-terminus, the 218-residue chain is Glycerol-3-phosphate acyltransferase (218 aa).

6 helical membrane-spanning segments follow: residues 3–23, 53–73, 82–102, 112–132, 142–162, and 166–186; these read FAIFAFLSFISGSIPFGYWIA, GFPVLVLDVAKGIFPVYLSGI, FQLACGVLAVLGHMFSPFLGF, LGVFLVLTPIACFGAIFVFLV, IGSIFASLTLPLVYAFSSILL, and EVSYWILGTMVFISIGIILTH.

This sequence belongs to the PlsY family. Probably interacts with PlsX.

Its subcellular location is the cell inner membrane. It carries out the reaction an acyl phosphate + sn-glycerol 3-phosphate = a 1-acyl-sn-glycero-3-phosphate + phosphate. The protein operates within lipid metabolism; phospholipid metabolism. Catalyzes the transfer of an acyl group from acyl-phosphate (acyl-PO(4)) to glycerol-3-phosphate (G3P) to form lysophosphatidic acid (LPA). This enzyme utilizes acyl-phosphate as fatty acyl donor, but not acyl-CoA or acyl-ACP. The polypeptide is Glycerol-3-phosphate acyltransferase (Leptospira borgpetersenii serovar Hardjo-bovis (strain JB197)).